The primary structure comprises 364 residues: Heat-inducible transcription repressor HrcA (364 aa).

The protein belongs to the HrcA family.

Its function is as follows. Negative regulator of class I heat shock genes (grpE-dnaK-dnaJ and groELS operons). Prevents heat-shock induction of these operons. This Cyanothece sp. (strain PCC 7425 / ATCC 29141) protein is Heat-inducible transcription repressor HrcA.